A 324-amino-acid chain; its full sequence is Glyoxylate/hydroxypyruvate reductase B (324 aa).

Residues Arg-237 and Glu-266 contribute to the active site. Residue His-285 is the Proton donor of the active site.

Belongs to the D-isomer specific 2-hydroxyacid dehydrogenase family. GhrB subfamily. In terms of assembly, homodimer.

It is found in the cytoplasm. It carries out the reaction glycolate + NADP(+) = glyoxylate + NADPH + H(+). The enzyme catalyses (R)-glycerate + NAD(+) = 3-hydroxypyruvate + NADH + H(+). The catalysed reaction is (R)-glycerate + NADP(+) = 3-hydroxypyruvate + NADPH + H(+). In terms of biological role, catalyzes the NADPH-dependent reduction of glyoxylate and hydroxypyruvate into glycolate and glycerate, respectively. This chain is Glyoxylate/hydroxypyruvate reductase B, found in Escherichia coli O6:H1 (strain CFT073 / ATCC 700928 / UPEC).